The following is a 240-amino-acid chain: Uridylate kinase (240 aa).

12–15 (KLSG) is a binding site for ATP. Positions 20-25 (GDQGYG) are involved in allosteric activation by GTP. G54 contributes to the UMP binding site. G55 and R59 together coordinate ATP. Residues D74 and 135-142 (TGNPYFST) each bind UMP. 3 residues coordinate ATP: N163, Y169, and D172.

It belongs to the UMP kinase family. Homohexamer.

The protein resides in the cytoplasm. It catalyses the reaction UMP + ATP = UDP + ADP. The protein operates within pyrimidine metabolism; CTP biosynthesis via de novo pathway; UDP from UMP (UMPK route): step 1/1. Its activity is regulated as follows. Allosterically activated by GTP. Inhibited by UTP. Functionally, catalyzes the reversible phosphorylation of UMP to UDP. The protein is Uridylate kinase of Oceanobacillus iheyensis (strain DSM 14371 / CIP 107618 / JCM 11309 / KCTC 3954 / HTE831).